We begin with the raw amino-acid sequence, 65 residues long: Large ribosomal subunit protein uL29 (65 aa).

The protein belongs to the universal ribosomal protein uL29 family.

This is Large ribosomal subunit protein uL29 from Acidovorax ebreus (strain TPSY) (Diaphorobacter sp. (strain TPSY)).